Here is a 2240-residue protein sequence, read N- to C-terminus: Nonribisomal peptide synthetase notE (2240 aa).

Residues 22–52 form a disordered region; sequence TETMRETLSSSSSPLSLSSITSPLSSASEPP. The span at 28-52 shows a compositional bias: low complexity; sequence TLSSSSSPLSLSSITSPLSSASEPP. Residues 85-484 are adenylation 1; sequence QQRCREAPES…GRKEGQVKIR (400 aa). The 77-residue stretch at 616–692 folds into the Carrier 1 domain; the sequence is PPTTATEHAL…EQARKATPVS (77 aa). At Ser-653 the chain carries O-(pantetheine 4'-phosphoryl)serine. Residues 732–1144 form a condensation 1 region; the sequence is EDIFPCTPLQ…DFASPQDRDL (413 aa). The tract at residues 1167-1564 is adenylation 2; sequence QEARQPSREA…GRRDTQLKLR (398 aa). The region spanning 1700–1776 is the Carrier 2 domain; that stretch reads PVSRGPELRL…ELARCTGEEP (77 aa). Residue Ser-1737 is modified to O-(pantetheine 4'-phosphoryl)serine. The tract at residues 1845-2159 is condensation 2; sequence FSFHGEVSVE…ILQHQNIDMD (315 aa). The disordered stretch occupies residues 2008–2027; sequence CTMPVKATPPTDSDDSRPSA.

The protein belongs to the NRP synthetase family.

It carries out the reaction L-proline + L-tryptophan + 2 ATP = brevianamide F + 2 AMP + 2 diphosphate + 2 H(+). The protein operates within alkaloid biosynthesis. Functionally, nonribisomal peptide synthetase; part of the gene cluster that mediates the biosynthesis of notoamide, a fungal indole alkaloid that belongs to a family of natural products containing a characteristic bicyclo[2.2.2]diazaoctane core. The first step of notoamide biosynthesis involves coupling of L-proline and L-tryptophan by the bimodular NRPS notE, to produce cyclo-L-tryptophan-L-proline called brevianamide F. The reverse prenyltransferase notF then acts as a deoxybrevianamide E synthase and converts brevianamide F to deoxybrevianamide E via reverse prenylation at C-2 of the indole ring leading to the bicyclo[2.2.2]diazaoctane core. Deoxybrevianamide E is further hydroxylated at C-6 of the indole ring, likely catalyzed by the cytochrome P450 monooxygenase notG, to yield 6-hydroxy-deoxybrevianamide E. 6-hydroxy-deoxybrevianamide E is a specific substrate of the prenyltransferase notC for normal prenylation at C-7 to produce 6-hydroxy-7-prenyl-deoxybrevianamide, also called notoamide S. As the proposed pivotal branching point in notoamide biosynthesis, notoamide S can be diverted to notoamide E through an oxidative pyran ring closure putatively catalyzed by either notH cytochrome P450 monooxygenase or the notD FAD-linked oxidoreductase. This step would be followed by an indole 2,3-epoxidation-initiated pinacol-like rearrangement catalyzed by the notB FAD-dependent monooxygenase leading to the formation of notoamide C and notoamide D. On the other hand notoamide S is converted to notoamide T by notH (or notD), a bifunctional oxidase that also functions as the intramolecular Diels-Alderase responsible for generation of (+)-notoamide T. To generate antipodal (-)-notoaminide T, notH' (or notD') in Aspergillus versicolor is expected to catalyze a Diels-Alder reaction leading to the opposite stereochemistry. The remaining oxidoreductase notD (or notH) likely catalyzes the oxidative pyran ring formation to yield (+)-stephacidin A. The FAD-dependent monooxygenase notI is highly similar to notB and is predicted to catalyze a similar conversion from (+)-stephacidin A to (-)-notoamide B via the 2,3-epoxidation of (+)-stephacidin A followed by a pinacol-type rearrangement. Finally, it remains unclear which enzyme could be responsible for the final hydroxylation steps leading to notoamide A and sclerotiamide. This is Nonribisomal peptide synthetase notE from Aspergillus sp. (strain MF297-2).